The primary structure comprises 418 residues: Lariat debranching enzyme (418 aa).

A divalent metal cation is bound by residues C8, H10, D39, and N84. The lariat recognition loop stretch occupies residues 124-154; sequence SGIYNERHYRSGHFERPPYNESTIRSVYHVR. Residues H174, H226, and H228 each contribute to the a divalent metal cation site. The tract at residues 372-418 is disordered; that stretch reads GERTDIPASLAPSDLPTYDSEEIPIDDIDEIEEMEEAKADDHTRDDA. The segment covering 390–406 has biased composition (acidic residues); that stretch reads DSEEIPIDDIDEIEEME. Basic and acidic residues predominate over residues 407–418; the sequence is EAKADDHTRDDA.

It belongs to the lariat debranching enzyme family. It depends on Fe(2+) as a cofactor. Zn(2+) serves as cofactor. Requires Mn(2+) as cofactor. Widely expressed. Expressed in roots, stems, cauline and rosette leaves, flower buds and siliques.

It localises to the nucleus. Active in presence of diverse metals including Fe(2+), Zn(2+), Mn(2+). Binds two metal cations in two adjacent alpha and beta metal-binding pockets. Functionally, cleaves the 2'-5' phosphodiester linkage at the branch point of lariat intron pre-mRNAs after splicing and converts them into linear molecules that are subsequently degraded. It thereby facilitates ribonucleotide turnover. It may also participate in retrovirus replication via an RNA lariat intermediate in cDNA synthesis. Plays en essential role during embryogenesis. The protein is Lariat debranching enzyme (DBR1) of Arabidopsis thaliana (Mouse-ear cress).